A 359-amino-acid polypeptide reads, in one-letter code: Nicotinate-nucleotide--dimethylbenzimidazole phosphoribosyltransferase (359 aa).

Glu318 acts as the Proton acceptor in catalysis.

Belongs to the CobT family. Homodimer.

It carries out the reaction 5,6-dimethylbenzimidazole + nicotinate beta-D-ribonucleotide = alpha-ribazole 5'-phosphate + nicotinate + H(+). The protein operates within nucleoside biosynthesis; alpha-ribazole biosynthesis; alpha-ribazole from 5,6-dimethylbenzimidazole: step 1/2. Catalyzes the synthesis of alpha-ribazole-5'-phosphate from nicotinate mononucleotide (NAMN) and 5,6-dimethylbenzimidazole (DMB). In Shigella flexneri serotype 5b (strain 8401), this protein is Nicotinate-nucleotide--dimethylbenzimidazole phosphoribosyltransferase.